Consider the following 95-residue polypeptide: Secreted RxLR effector protein 20 (95 aa).

A signal peptide spans 1–20 (MQSPYIILFALVTLLGSISG). Positions 47–50 (RLLR) match the RxLR motif.

Belongs to the RxLR effector family.

The protein resides in the secreted. It is found in the host nucleus. The protein localises to the host cytoplasm. Functionally, secreted effector that partially suppresses the host cell death induced by cell death-inducing proteins. The chain is Secreted RxLR effector protein 20 from Plasmopara viticola (Downy mildew of grapevine).